We begin with the raw amino-acid sequence, 315 residues long: Putative carboxypeptidase RC0549 (315 aa).

Ser125 functions as the Nucleophile in the catalytic mechanism. Residues Glu225 and His288 each act as charge relay system in the active site.

The protein belongs to the peptidase S66 family.

The polypeptide is Putative carboxypeptidase RC0549 (Rickettsia conorii (strain ATCC VR-613 / Malish 7)).